The sequence spans 1294 residues: Unconventional myosin-VI (1294 aa).

The region spanning Glu2–Glu53 is the Myosin N-terminal SH3-like domain. Residues Lys57–Lys771 form the Myosin motor domain. Gly151–Thr158 serves as a coordination point for ATP. Residue Ser267 is modified to Phosphoserine. Positions Tyr273–Phe317 are responsible for slow ATPase activity. The residue at position 405 (Thr405) is a Phosphothreonine. Ser604 is subject to Phosphoserine. The tract at residues Phe665–Asn672 is actin-binding. Residues Lys782–Ile810 form a required for binding calmodulin region. One can recognise an IQ domain in the interval Ala814–Lys834. The tract at residues Pro835–Lys916 is three-helix bundle. The SAH stretch occupies residues Lys917–Glu984. Positions Glu934–Arg955 are disordered. Position 1025 is a phosphoserine (Ser1025). Positions Lys1060–Ala1285 are interaction with TAX1BP1 and CALCOCO2/NDP52. The segment at Arg1116–Leu1118 is interaction with OPTN. Residue Ser1155 is modified to Phosphoserine. The interaction with TOM1 stretch occupies residues Gln1157–Ala1285.

Belongs to the TRAFAC class myosin-kinesin ATPase superfamily. Myosin family. Homodimer; dimerization seems to implicate the unfolding of the three-helix bundle region creating an additional calmodulin binding site, and cargo binding. Able to function as a monomer under specific conditions in vitro. Forms a complex with CFTR and DAB2 in the apical membrane of epithelial cells. Component of the DISP/DOCK7-induced septin displacement complex, at least composed of DOCK7, LRCH3 and MYO6. Binding to calmodulin through a unique insert, not found in other myosins, located in the neck region between the motor domain and the IQ domain appears to contribute to the directionality reversal. This interaction occurs only if the C-terminal lobe of calmodulin is occupied by calcium. Interaction with F-actin/ACTN1 occurs only at the apical brush border domain of the proximal tubule cells. Interacts with DAB2. In vitro, the C-terminal globular tail binds a C-terminal region of DAB2. Interacts with CFTR. Interacts with CABP5. Interacts with TOM1. Interacts with OPTN. Interacts with TAX1BP1 and CALCOCO2/NDP52. Interacts with TOM1L2. Interacts with CLIC5; may work together in a complex which also includes RDX and MYO6 to stabilize linkages between the plasma membrane and subjacent actin cytoskeleton at the base of stereocilia. Post-translationally, phosphorylation in the motor domain, induced by EGF, results in translocation of MYO6 from the cell surface to membrane ruffles and affects F-actin dynamics. Phosphorylated in vitro by p21-activated kinase (PAK). Expressed in most tissues examined including heart, brain, placenta, pancreas, spleen, thymus, prostate, testis, ovary, small intestine and colon. Highest levels in brain, pancreas, testis and small intestine. Also expressed in fetal brain and cochlea. Isoform 1 and isoform 2, containing the small insert, and isoform 4, containing neither insert, are expressed in unpolarized epithelial cells.

The protein resides in the golgi apparatus. It localises to the trans-Golgi network membrane. It is found in the nucleus. Its subcellular location is the cytoplasm. The protein localises to the perinuclear region. The protein resides in the membrane. It localises to the clathrin-coated pit. It is found in the cytoplasmic vesicle. Its subcellular location is the clathrin-coated vesicle. The protein localises to the cell projection. The protein resides in the filopodium. It localises to the ruffle membrane. It is found in the microvillus. Its subcellular location is the cytosol. The protein localises to the autophagosome. The protein resides in the endosome. It localises to the clathrin-coated vesicle membrane. Myosins are actin-based motor molecules with ATPase activity. Unconventional myosins serve in intracellular movements. Myosin 6 is a reverse-direction motor protein that moves towards the minus-end of actin filaments. Has slow rate of actin-activated ADP release due to weak ATP binding. Functions in a variety of intracellular processes such as vesicular membrane trafficking and cell migration. Required for the structural integrity of the Golgi apparatus via the p53-dependent pro-survival pathway. Appears to be involved in a very early step of clathrin-mediated endocytosis in polarized epithelial cells. Together with TOM1, mediates delivery of endocytic cargo to autophagosomes thereby promoting autophagosome maturation and driving fusion with lysosomes. Links TOM1 with autophagy receptors, such as TAX1BP1; CALCOCO2/NDP52 and OPTN. May act as a regulator of F-actin dynamics. As part of the DISP complex, may regulate the association of septins with actin and thereby regulate the actin cytoskeleton. May play a role in transporting DAB2 from the plasma membrane to specific cellular targets. May play a role in the extension and network organization of neurites. Required for structural integrity of inner ear hair cells. Required for the correct localization of CLIC5 and RDX at the stereocilium base. Modulates RNA polymerase II-dependent transcription. In Homo sapiens (Human), this protein is Unconventional myosin-VI.